We begin with the raw amino-acid sequence, 360 residues long: Phospho-N-acetylmuramoyl-pentapeptide-transferase (360 aa).

The next 10 helical transmembrane spans lie at 24–44 (RAVM…PWTI), 69–89 (GTPT…TLLW), 92–112 (WANP…ALGF), 133–153 (MVWQ…LAAN), 158–178 (ILIV…GFLV), 199–219 (GLAT…AYAS), 239–259 (VVIF…FNAY), 263–283 (VFMG…VAVI), 288–308 (FVLV…MLQV), and 337–357 (QVVV…LSTL).

It belongs to the glycosyltransferase 4 family. MraY subfamily. Requires Mg(2+) as cofactor.

Its subcellular location is the cell inner membrane. The catalysed reaction is UDP-N-acetyl-alpha-D-muramoyl-L-alanyl-gamma-D-glutamyl-meso-2,6-diaminopimeloyl-D-alanyl-D-alanine + di-trans,octa-cis-undecaprenyl phosphate = di-trans,octa-cis-undecaprenyl diphospho-N-acetyl-alpha-D-muramoyl-L-alanyl-D-glutamyl-meso-2,6-diaminopimeloyl-D-alanyl-D-alanine + UMP. Its pathway is cell wall biogenesis; peptidoglycan biosynthesis. In terms of biological role, catalyzes the initial step of the lipid cycle reactions in the biosynthesis of the cell wall peptidoglycan: transfers peptidoglycan precursor phospho-MurNAc-pentapeptide from UDP-MurNAc-pentapeptide onto the lipid carrier undecaprenyl phosphate, yielding undecaprenyl-pyrophosphoryl-MurNAc-pentapeptide, known as lipid I. In Neisseria meningitidis serogroup C / serotype 2a (strain ATCC 700532 / DSM 15464 / FAM18), this protein is Phospho-N-acetylmuramoyl-pentapeptide-transferase.